Here is a 161-residue protein sequence, read N- to C-terminus: 3-hydroxyacyl-[acyl-carrier-protein] dehydratase FabZ (161 aa).

His64 is an active-site residue.

The protein belongs to the thioester dehydratase family. FabZ subfamily.

The protein resides in the cytoplasm. It carries out the reaction a (3R)-hydroxyacyl-[ACP] = a (2E)-enoyl-[ACP] + H2O. Its function is as follows. Involved in unsaturated fatty acids biosynthesis. Catalyzes the dehydration of short chain beta-hydroxyacyl-ACPs and long chain saturated and unsaturated beta-hydroxyacyl-ACPs. The protein is 3-hydroxyacyl-[acyl-carrier-protein] dehydratase FabZ of Paramagnetospirillum magneticum (strain ATCC 700264 / AMB-1) (Magnetospirillum magneticum).